Consider the following 450-residue polypeptide: tRNA modification GTPase MnmE (450 aa).

(6S)-5-formyl-5,6,7,8-tetrahydrofolate is bound by residues arginine 20, glutamate 78, and lysine 117. One can recognise a TrmE-type G domain in the interval glycine 211–glutamine 372. Asparagine 221 is a binding site for K(+). GTP contacts are provided by residues asparagine 221 to threonine 226, threonine 240 to threonine 246, and aspartate 265 to glycine 268. Serine 225 is a Mg(2+) binding site. K(+)-binding residues include threonine 240, isoleucine 242, and threonine 245. Threonine 246 is a binding site for Mg(2+). Lysine 450 contacts (6S)-5-formyl-5,6,7,8-tetrahydrofolate.

The protein belongs to the TRAFAC class TrmE-Era-EngA-EngB-Septin-like GTPase superfamily. TrmE GTPase family. In terms of assembly, homodimer. Heterotetramer of two MnmE and two MnmG subunits. Requires K(+) as cofactor.

The protein localises to the cytoplasm. Exhibits a very high intrinsic GTPase hydrolysis rate. Involved in the addition of a carboxymethylaminomethyl (cmnm) group at the wobble position (U34) of certain tRNAs, forming tRNA-cmnm(5)s(2)U34. The protein is tRNA modification GTPase MnmE of Thermotoga petrophila (strain ATCC BAA-488 / DSM 13995 / JCM 10881 / RKU-1).